A 445-amino-acid chain; its full sequence is Glucose-6-phosphate isomerase (445 aa).

Glu-284 (proton donor) is an active-site residue. Active-site residues include His-305 and Lys-419.

This sequence belongs to the GPI family.

It is found in the cytoplasm. It carries out the reaction alpha-D-glucose 6-phosphate = beta-D-fructose 6-phosphate. It participates in carbohydrate biosynthesis; gluconeogenesis. Its pathway is carbohydrate degradation; glycolysis; D-glyceraldehyde 3-phosphate and glycerone phosphate from D-glucose: step 2/4. Functionally, catalyzes the reversible isomerization of glucose-6-phosphate to fructose-6-phosphate. In Leptospira interrogans serogroup Icterohaemorrhagiae serovar Lai (strain 56601), this protein is Glucose-6-phosphate isomerase.